Reading from the N-terminus, the 391-residue chain is MSNNEDPINEFVSNGDSFEKVKQRLKDRSKKVAQTKEILSKQANQTKEILSKQAVKIAKQAEEHESFINKVTHLLGVLGFGGFCFLLGARPQDIPYVYCLFFFIFVPLRWIYYRFKKWHYFLLDFCYYANTIFLVDLLLYPKDEKLFMVCFSFAEGPLAWALIVWRCSLVFSSVDKIVSVLIHLLPGLVFFTIRWWNPATFEAMHPEGTSGRASWPYVEDKSFLFTWLFLVPLVAYFLWQLLYFLIVNVLRRQRLLRDPEVMTSYRELSKKAQKANNVWWRLSGLLGDQNRMLMYILLQALFTVATTALTVPIFLSYELHAVFQILKVSAAVWNGGSFLLDVMPRQVILKEKKKSELQPAHIQQYHSEPKQDQSPNSMEIRMKTIHSAEEQ.

The Cytoplasmic portion of the chain corresponds to 1–66; sequence MSNNEDPINE…IAKQAEEHES (66 aa). A helical transmembrane segment spans residues 67-87; the sequence is FINKVTHLLGVLGFGGFCFLL. Residues 88–92 lie on the Lumenal side of the membrane; that stretch reads GARPQ. Residues 93 to 113 traverse the membrane as a helical segment; that stretch reads DIPYVYCLFFFIFVPLRWIYY. Residues 114–119 are Cytoplasmic-facing; that stretch reads RFKKWH. The helical transmembrane segment at 120 to 140 threads the bilayer; the sequence is YFLLDFCYYANTIFLVDLLLY. Over 141–144 the chain is Lumenal; sequence PKDE. The helical transmembrane segment at 145 to 165 threads the bilayer; it reads KLFMVCFSFAEGPLAWALIVW. At 166-172 the chain is on the cytoplasmic side; sequence RCSLVFS. A helical transmembrane segment spans residues 173-193; it reads SVDKIVSVLIHLLPGLVFFTI. The Lumenal segment spans residues 194-226; it reads RWWNPATFEAMHPEGTSGRASWPYVEDKSFLFT. A helical transmembrane segment spans residues 227 to 247; it reads WLFLVPLVAYFLWQLLYFLIV. Residues 248 to 294 are Cytoplasmic-facing; sequence NVLRRQRLLRDPEVMTSYRELSKKAQKANNVWWRLSGLLGDQNRMLM. A helical membrane pass occupies residues 295 to 315; sequence YILLQALFTVATTALTVPIFL. Topologically, residues 316–318 are lumenal; sequence SYE. Residues 319 to 339 traverse the membrane as a helical segment; that stretch reads LHAVFQILKVSAAVWNGGSFL. Residues 340-391 are Cytoplasmic-facing; that stretch reads LDVMPRQVILKEKKKSELQPAHIQQYHSEPKQDQSPNSMEIRMKTIHSAEEQ. Residues 354–391 are disordered; the sequence is KSELQPAHIQQYHSEPKQDQSPNSMEIRMKTIHSAEEQ. The span at 380-391 shows a compositional bias: basic and acidic residues; sequence IRMKTIHSAEEQ.

The protein belongs to the GPC1 family.

The protein resides in the membrane. The catalysed reaction is sn-glycerol 3-phosphocholine + an acyl-CoA = a monoacyl-sn-glycero-3-phosphocholine + CoA. The enzyme catalyses sn-glycero-3-phosphoethanolamine + an acyl-CoA = a monoacyl-sn-glycero-3-phosphoethanolamine + CoA. It catalyses the reaction sn-glycerol 3-phosphocholine + hexadecanoyl-CoA = hexadecanoyl-sn-glycero-3-phosphocholine + CoA. It carries out the reaction (9Z)-hexadecenoyl-CoA + sn-glycerol 3-phosphocholine = (9Z-hexadecenoyl)-sn-glycero-3-phosphocholine + CoA. The catalysed reaction is (9Z,12Z)-octadecadienoyl-CoA + sn-glycerol 3-phosphocholine = (9Z,12Z-octadecadienoyl)-sn-glycero-3-phosphocholine + CoA. The enzyme catalyses (12R)-hydroxy-(9Z)-octadecenoyl-CoA + sn-glycerol 3-phosphocholine = (12R-hydroxy-9Z-octadecenoyl)-sn-glycero-3-phosphocholine + CoA. It catalyses the reaction (9Z,12Z,15Z)-octadecatrienoyl-CoA + sn-glycerol 3-phosphocholine = (9Z,12Z,15Z-octadecatrienoyl)-sn-glycero-3-phosphocholine + CoA. It carries out the reaction sn-glycerol 3-phosphocholine + (9Z)-octadecenoyl-CoA = (9Z-octadecenoyl)-sn-glycero-3-phosphocholine + CoA. Glycerophosphocholine acyltransferase (GPCAT) that utilizes acyl-CoA to acylate glycero-3-phosphocholine (GPC), forming lysophosphatidylcholine (LPC). Shows broad acyl specificities with a preference for 16:0-CoA, polyunsaturated acyl-CoA, and the hydroxylated ricinoleoyl-CoA. Also catalyzes the acylation of glycero-3-phosphoethanolamine (GPE) with acyl-CoA. In addition to acyl-CoA, GPCAT efficiently utilizes LPC and lysophosphatidylethanolamine (LPE) as acyl donors in the acylation of GPC. Contributes to the maintenance of phosphatidylcholine (PC) homeostasis and might also have specific functions in acyl editing of PC, such as transferring acyl groups modified at the sn-2 position of PC to the sn-1. The sequence is that of Glycerophosphocholine acyltransferase 1 from Ricinus communis (Castor bean).